We begin with the raw amino-acid sequence, 142 residues long: Large ribosomal subunit protein uL11 (142 aa).

It belongs to the universal ribosomal protein uL11 family. Part of the ribosomal stalk of the 50S ribosomal subunit. Interacts with L10 and the large rRNA to form the base of the stalk. L10 forms an elongated spine to which L12 dimers bind in a sequential fashion forming a multimeric L10(L12)X complex. Post-translationally, one or more lysine residues are methylated.

Forms part of the ribosomal stalk which helps the ribosome interact with GTP-bound translation factors. The polypeptide is Large ribosomal subunit protein uL11 (Solibacter usitatus (strain Ellin6076)).